Reading from the N-terminus, the 198-residue chain is MVNYPHKVSSQKRQTSLSQPKNFANRGMSFEKMINATNDYYLSQGLAVIHKKPTPIQIVQVDYPQRSRAKIVEAYFRQASTTDYSGVYNGYYIDFEVKETKQKRAIPMKNFHPHQIQHMEQVLAQQGICFVLLHFSSQQETYLLPAFDLIRFYHQDKRQKSMPLEYIREYGYEIKAGAFPQIPYLNVIKEHLLGGKTR.

The tract at residues 1–22 (MVNYPHKVSSQKRQTSLSQPKN) is disordered. Positions 11 to 22 (QKRQTSLSQPKN) are enriched in polar residues. Positions 81, 83, 96, and 115 each coordinate Mg(2+).

This sequence belongs to the RecU family. The cofactor is Mg(2+).

It is found in the cytoplasm. The enzyme catalyses Endonucleolytic cleavage at a junction such as a reciprocal single-stranded crossover between two homologous DNA duplexes (Holliday junction).. Functionally, endonuclease that resolves Holliday junction intermediates in genetic recombination. Cleaves mobile four-strand junctions by introducing symmetrical nicks in paired strands. Promotes annealing of linear ssDNA with homologous dsDNA. Required for DNA repair, homologous recombination and chromosome segregation. The polypeptide is Holliday junction resolvase RecU (Streptococcus pneumoniae (strain P1031)).